We begin with the raw amino-acid sequence, 571 residues long: Gag-Pro polyprotein (571 aa).

Gly2 carries N-myristoyl glycine; by host lipidation. A PPXY motif motif is present at residues 100 to 103; it reads PPPY. 2 consecutive repeats follow at residues 342–362 and 367–387; these read PPPG…DCPT. CCHC-type zinc fingers lie at residues 345–362 and 370–387; these read GPCY…DCPT and GPCP…DCPT. One can recognise a Peptidase A2 domain in the interval 447 to 525; sequence ALMLVDTGAE…DKWQILGRDV (79 aa). Asp452 acts as the Protease; shared with dimeric partner in catalysis.

In terms of assembly, homodimer; the homodimers are part of the immature particles. Interacts with human TSG101 and NEDD4; these interactions are essential for budding and release of viral particles. As to quaternary structure, homodimer; further assembles as homohexamers. Post-translationally, specific enzymatic cleavages by the viral protease yield mature proteins. The polyprotein is cleaved during and after budding, this process is termed maturation. The protease is autoproteolytically processed at its N- and C-termini. In terms of processing, gag polyprotein: Myristoylated. Myristoylation of the matrix (MA) domain mediates the transport and binding of Gag polyproteins to the host plasma membrane and is required for the assembly of viral particles.

Its subcellular location is the virion. In terms of biological role, the matrix domain targets Gag, Gag-Pro and Gag-Pro-Pol polyproteins to the plasma membrane via a multipartite membrane binding signal, that includes its myristoylated N-terminus. Its function is as follows. Matrix protein. Forms the spherical core of the virus that encapsulates the genomic RNA-nucleocapsid complex. Functionally, binds strongly to viral nucleic acids and promote their aggregation. Also destabilizes the nucleic acids duplexes via highly structured zinc-binding motifs. In terms of biological role, the aspartyl protease mediates proteolytic cleavages of Gag and Gag-Pol polyproteins during or shortly after the release of the virion from the plasma membrane. Cleavages take place as an ordered, step-wise cascade to yield mature proteins. This process is called maturation. Displays maximal activity during the budding process just prior to particle release from the cell. The protein is Gag-Pro polyprotein of Bos taurus (Bovine).